A 302-amino-acid chain; its full sequence is 33 kDa chaperonin (302 aa).

2 disulfide bridges follow: cysteine 247/cysteine 249 and cysteine 280/cysteine 283.

It belongs to the HSP33 family. Under oxidizing conditions two disulfide bonds are formed involving the reactive cysteines. Under reducing conditions zinc is bound to the reactive cysteines and the protein is inactive.

The protein localises to the cytoplasm. Redox regulated molecular chaperone. Protects both thermally unfolding and oxidatively damaged proteins from irreversible aggregation. Plays an important role in the bacterial defense system toward oxidative stress. This chain is 33 kDa chaperonin, found in Prochlorococcus marinus (strain MIT 9301).